The sequence spans 121 residues: Prefoldin subunit beta (121 aa).

This sequence belongs to the prefoldin subunit beta family. In terms of assembly, heterohexamer of two alpha and four beta subunits.

The protein resides in the cytoplasm. Molecular chaperone capable of stabilizing a range of proteins. Seems to fulfill an ATP-independent, HSP70-like function in archaeal de novo protein folding. The sequence is that of Prefoldin subunit beta from Methanosphaerula palustris (strain ATCC BAA-1556 / DSM 19958 / E1-9c).